Consider the following 79-residue polypeptide: Cyclin-dependent kinases regulatory subunit 2 (79 aa).

Residue lysine 4 is modified to N6-acetyllysine.

The protein belongs to the CKS family. In terms of assembly, forms a homohexamer that can probably bind six kinase subunits.

Binds to the catalytic subunit of the cyclin dependent kinases and is essential for their biological function. The protein is Cyclin-dependent kinases regulatory subunit 2 (Cks2) of Mus musculus (Mouse).